Consider the following 626-residue polypeptide: Chaperone protein HtpG (626 aa).

The a; substrate-binding stretch occupies residues 1–331 (MSETVERHEF…TDDLPLNVSR (331 aa)). Residues 332-544 (EMLQSTPTLQ…GMGPDLQMQR (213 aa)) form a b region. The segment at 545 to 626 (LLRRAGRGFG…GTAAKPAGSA (82 aa)) is c.

Belongs to the heat shock protein 90 family. Homodimer.

The protein resides in the cytoplasm. Functionally, molecular chaperone. Has ATPase activity. This is Chaperone protein HtpG from Methylorubrum extorquens (strain CM4 / NCIMB 13688) (Methylobacterium extorquens).